A 360-amino-acid chain; its full sequence is tRNA (guanine(37)-N(1))-methyltransferase (360 aa).

S-adenosyl-L-methionine is bound by residues arginine 197, 235 to 236 (DL), and asparagine 283.

Belongs to the class I-like SAM-binding methyltransferase superfamily. TRM5/TYW2 family. In terms of assembly, monomer.

The protein localises to the mitochondrion matrix. It localises to the nucleus. The protein resides in the cytoplasm. It carries out the reaction guanosine(37) in tRNA + S-adenosyl-L-methionine = N(1)-methylguanosine(37) in tRNA + S-adenosyl-L-homocysteine + H(+). Specifically methylates the N1 position of guanosine-37 in various cytoplasmic and mitochondrial tRNAs. Methylation is not dependent on the nature of the nucleoside 5' of the target nucleoside. This is the first step in the biosynthesis of wybutosine (yW), a modified base adjacent to the anticodon of tRNAs and required for accurate decoding. This chain is tRNA (guanine(37)-N(1))-methyltransferase, found in Encephalitozoon cuniculi (strain GB-M1) (Microsporidian parasite).